A 472-amino-acid polypeptide reads, in one-letter code: NADH-quinone oxidoreductase subunit N (472 aa).

14 consecutive transmembrane segments (helical) span residues 5–25 (LLTTEMLTALLGIGLLAIGLL), 36–56 (AYAAVFGLLGILVVTFFQYGI), 77–97 (IFLVAAILVILSAIDYVDGLP), 103–123 (FYALLVFATLGMMVMASANDL), 126–146 (LYVGMELMTITFFILVAYILG), 158–178 (LLLGGASSAVLLYGLSLLYGL), 197–217 (LAIAVVTIIAGFGFKISAVPF), 229–249 (PTPVTGFLAAASKAAGFAVLV), 264–284 (WLTVIAVLAGVTMVIGNVVAI), 292–309 (MLAYSSVAQAGYLLVGLM), 319–339 (ILFYAMLYVVANMGAFAVATA), 363–383 (ASVMTISLLSLAGIPPLAGFV), 396–416 (GVLWPAFLGFVMSMVSVYYYL), and 441–461 (LTVIFSMVVTVILGIYPGPLA).

The protein belongs to the complex I subunit 2 family. As to quaternary structure, NDH-1 is composed of 14 different subunits. Subunits NuoA, H, J, K, L, M, N constitute the membrane sector of the complex.

Its subcellular location is the cell membrane. It carries out the reaction a quinone + NADH + 5 H(+)(in) = a quinol + NAD(+) + 4 H(+)(out). Its function is as follows. NDH-1 shuttles electrons from NADH, via FMN and iron-sulfur (Fe-S) centers, to quinones in the respiratory chain. The immediate electron acceptor for the enzyme in this species is believed to be a menaquinone. Couples the redox reaction to proton translocation (for every two electrons transferred, four hydrogen ions are translocated across the cytoplasmic membrane), and thus conserves the redox energy in a proton gradient. The sequence is that of NADH-quinone oxidoreductase subunit N from Heliobacterium modesticaldum (strain ATCC 51547 / Ice1).